The chain runs to 101 residues: NAD(P)H-quinone oxidoreductase subunit 4L, chloroplastic (101 aa).

3 consecutive transmembrane segments (helical) span residues 2-22 (LLEH…YGLI), 32-52 (MCLE…SDFF), and 61-81 (IFSI…SAIV).

This sequence belongs to the complex I subunit 4L family. As to quaternary structure, NDH is composed of at least 16 different subunits, 5 of which are encoded in the nucleus.

The protein resides in the plastid. Its subcellular location is the chloroplast thylakoid membrane. The enzyme catalyses a plastoquinone + NADH + (n+1) H(+)(in) = a plastoquinol + NAD(+) + n H(+)(out). The catalysed reaction is a plastoquinone + NADPH + (n+1) H(+)(in) = a plastoquinol + NADP(+) + n H(+)(out). Its function is as follows. NDH shuttles electrons from NAD(P)H:plastoquinone, via FMN and iron-sulfur (Fe-S) centers, to quinones in the photosynthetic chain and possibly in a chloroplast respiratory chain. The immediate electron acceptor for the enzyme in this species is believed to be plastoquinone. Couples the redox reaction to proton translocation, and thus conserves the redox energy in a proton gradient. The protein is NAD(P)H-quinone oxidoreductase subunit 4L, chloroplastic of Carica papaya (Papaya).